A 403-amino-acid polypeptide reads, in one-letter code: Argininosuccinate synthase (403 aa).

Residues 10–18 (AYSGGVDTS) and Ala38 contribute to the ATP site. L-citrulline is bound at residue Tyr89. Gly119 provides a ligand contact to ATP. The L-aspartate site is built by Thr121, Asn125, and Asp126. Asn125 contacts L-citrulline. L-citrulline is bound by residues Arg129, Ser177, Ser186, Glu262, and Tyr274.

It belongs to the argininosuccinate synthase family. Type 1 subfamily. As to quaternary structure, homotetramer.

The protein localises to the cytoplasm. It catalyses the reaction L-citrulline + L-aspartate + ATP = 2-(N(omega)-L-arginino)succinate + AMP + diphosphate + H(+). Its pathway is amino-acid biosynthesis; L-arginine biosynthesis; L-arginine from L-ornithine and carbamoyl phosphate: step 2/3. This chain is Argininosuccinate synthase, found in Synechococcus sp. (strain CC9605).